The chain runs to 673 residues: MESTTSSPQPPPSDALEAFPQKSMEPADIVVLVLYFLFVLAVGLWSTVRTKRDTVKGYFLAGGDMVWWPVGASLFASNVGSGHFIGLAGSGAAVGISVAAYELNGLFSVLMLAWIFLPIYIAGQVTTMPEYLKRRFGGSRIPITLASIYPSTHSLTILQVDMYAGAIFIQQSLHLDLYLAIVGLLAVTALYTVAGGLAAVIYTDALQTVIMLIGAFILMGYSFAAVGGMEGLKDQYFLALASNRSENSSCGLPREDAFHIFRDPLTSDLPWPGILFGMSIPSLWYWCTDQVIVQRSLAAKNLSHAKGGSLMAAYLKVLPLFLMVFPGMVSRILFPDQVACAHPDICQRVCSNPSGCSDIAYPKLVLELLPTGLRGLMMAVMVAALMSSLTSIFNSASTIFTMDLWHHIRPRASERELMIVGRVFVLALVLVSILWIPVVQASQGGQLFIYIQSISSYLQPPVAVVFIMGCFWKRTNEKGAFSGLILGLLLGLVRLILDFVYVQPRCDQPDDRPAVVKDVHYLYFSMILSSTTLITVFTVSWFTETPSKEMVSRLTWFTRHEPVAQKDSVPPENPLSLTISQNGTTEATGISIQLESVQEATTKAHSDGVSPKQSKVLKAILWLCGMEKDKEEPPSKVEPVIVSLEENPLVKTLLDVNCIVCISCAIFLWGYFA.

Topologically, residues 1–27 (MESTTSSPQPPPSDALEAFPQKSMEPA) are extracellular. A helical transmembrane segment spans residues 28 to 48 (DIVVLVLYFLFVLAVGLWSTV). Topologically, residues 49 to 56 (RTKRDTVK) are cytoplasmic. Residues 57-77 (GYFLAGGDMVWWPVGASLFAS) traverse the membrane as a helical segment. Residue Asn78 is a topological domain, extracellular. Residues 79–99 (VGSGHFIGLAGSGAAVGISVA) traverse the membrane as a helical segment. At 100–102 (AYE) the chain is on the cytoplasmic side. Residues 103–123 (LNGLFSVLMLAWIFLPIYIAG) form a helical membrane-spanning segment. Residues 124–180 (QVTTMPEYLKRRFGGSRIPITLASIYPSTHSLTILQVDMYAGAIFIQQSLHLDLYLA) lie on the Extracellular side of the membrane. Residues 181-201 (IVGLLAVTALYTVAGGLAAVI) form a helical membrane-spanning segment. The Cytoplasmic segment spans residues 202–208 (YTDALQT). A helical transmembrane segment spans residues 209-229 (VIMLIGAFILMGYSFAAVGGM). The Extracellular portion of the chain corresponds to 230–272 (EGLKDQYFLALASNRSENSSCGLPREDAFHIFRDPLTSDLPWP). A helical membrane pass occupies residues 273 to 293 (GILFGMSIPSLWYWCTDQVIV). Residues 294-308 (QRSLAAKNLSHAKGG) are Cytoplasmic-facing. Residues 309–329 (SLMAAYLKVLPLFLMVFPGMV) traverse the membrane as a helical segment. Residues 330–375 (SRILFPDQVACAHPDICQRVCSNPSGCSDIAYPKLVLELLPTGLRG) are Extracellular-facing. Residues 376–396 (LMMAVMVAALMSSLTSIFNSA) form a helical membrane-spanning segment. The Cytoplasmic portion of the chain corresponds to 397–418 (STIFTMDLWHHIRPRASERELM). Residues 419-439 (IVGRVFVLALVLVSILWIPVV) traverse the membrane as a helical segment. Over 440–446 (QASQGGQ) the chain is Extracellular. A helical transmembrane segment spans residues 447–467 (LFIYIQSISSYLQPPVAVVFI). Over 468 to 479 (MGCFWKRTNEKG) the chain is Cytoplasmic. The helical transmembrane segment at 480–500 (AFSGLILGLLLGLVRLILDFV) threads the bilayer. Residues 501–521 (YVQPRCDQPDDRPAVVKDVHY) lie on the Extracellular side of the membrane. Residues 522-542 (LYFSMILSSTTLITVFTVSWF) form a helical membrane-spanning segment. Over 543-652 (TETPSKEMVS…SLEENPLVKT (110 aa)) the chain is Cytoplasmic. Residues 653-673 (LLDVNCIVCISCAIFLWGYFA) traverse the membrane as a helical segment.

It belongs to the sodium:solute symporter (SSF) (TC 2.A.21) family. As to expression, expressed in kidney and small intestine.

The protein localises to the membrane. Its subcellular location is the apical cell membrane. The enzyme catalyses myo-inositol(out) + 2 Na(+)(out) = myo-inositol(in) + 2 Na(+)(in). It catalyses the reaction 1D-chiro-inositol(out) + 2 Na(+)(out) = 1D-chiro-inositol(in) + 2 Na(+)(in). It carries out the reaction D-glucose(out) + 2 Na(+)(out) = D-glucose(in) + 2 Na(+)(in). The catalysed reaction is D-xylose(out) + 2 Na(+)(out) = D-xylose(in) + 2 Na(+)(in). With respect to regulation, MI transport activity inhibited by D-chiro-inositol (DCI), phlorizin (Pz) and sodium (Na(+)). Insulin increases D-chiro-inositol uptake. Involved in the sodium-dependent cotransport of myo-inositol (MI) with a Na(+):MI stoichiometry of 2:1. Exclusively responsible for apical MI transport and absorption in intestine. Can also transport D-chiro-inositol (DCI) but not L-fucose. Exhibits stereospecific cotransport of both D-glucose and D-xylose. May induce apoptosis through the TNF-alpha, PDCD1 pathway. May play a role in the regulation of MI concentration in serum, involving reabsorption in at least the proximal tubule of the kidney. This chain is Sodium/myo-inositol cotransporter 2, found in Rattus norvegicus (Rat).